A 379-amino-acid polypeptide reads, in one-letter code: Homoserine O-succinyltransferase (379 aa).

In terms of domain architecture, AB hydrolase-1 spans 51 to 360 (NAVLICHALS…DAPQGHDAFL (310 aa)). The Nucleophile role is filled by S157. R227 lines the substrate pocket. Catalysis depends on residues D323 and H356. D357 contributes to the substrate binding site.

This sequence belongs to the AB hydrolase superfamily. MetX family. Homodimer.

It localises to the cytoplasm. It carries out the reaction L-homoserine + succinyl-CoA = O-succinyl-L-homoserine + CoA. Its pathway is amino-acid biosynthesis; L-methionine biosynthesis via de novo pathway; O-succinyl-L-homoserine from L-homoserine: step 1/1. Functionally, transfers a succinyl group from succinyl-CoA to L-homoserine, forming succinyl-L-homoserine. The polypeptide is Homoserine O-succinyltransferase (Pseudomonas aeruginosa (strain UCBPP-PA14)).